We begin with the raw amino-acid sequence, 400 residues long: Spermatogenic leucine zipper protein 1 (400 aa).

A disordered region spans residues 1–27 (MADSDSSSEMPAHSPSPSPIPCAKQKP). Ser-106 carries the phosphoserine modification. Positions 116-127 (RNKLRFKDDLFI) are helix-loop-helix motif. The tract at residues 128–193 (HFDPERENTM…HIRGEYRKLR (66 aa)) is basic motif. Coiled coils occupy residues 182–231 (SVHI…KDIV) and 268–293 (LIAA…LHLH). Ser-207 bears the Phosphoserine mark. Residues 252 to 273 (LEEQVKKLSQDTHSLHLIAALL) are leucine-zipper. Positions 295-332 (AGPGHEKPLQTSGEQDKKCGEQDKKCGEQDKKCGEQDK) are disordered.

Interacts with PPP1CC isoform gamma-2. Phosphorylated by MAPK1/ERK2 and MAPK3/ERK1.

It is found in the cytoplasm. The protein resides in the nucleus. Transcription factor that binds to the DNA sequence 5'-CANNTG-3'(E box) and the G-box motif. May play an important role in the regulation of cell proliferation and differentiation during spermatogenesis. In Rattus norvegicus (Rat), this protein is Spermatogenic leucine zipper protein 1 (Spz1).